The primary structure comprises 251 residues: MATQRISDEPAYVLHRHDWSESSLILEVFTRHHGRIALVAKGVKRPSSSFRPILLPLQLLHVAFGGDAEIRILKAAEWQGGHVMPTGDALMSGLYLNELLLTLLARDDPHTRLFDVYTQVVQVIASGHGEVLQSALRAFELLLLREIGLLPLLDAQTMTLLALDPESRYSLVPEGGLRQTNDADRASLSGAQWVALQQSLVDSAPFTATLRACSEVMTQLKPQLRALLNYHCGVQTLRTRQMMIDLQSLSL.

The protein belongs to the RecO family.

Involved in DNA repair and RecF pathway recombination. The polypeptide is DNA repair protein RecO (Albidiferax ferrireducens (strain ATCC BAA-621 / DSM 15236 / T118) (Rhodoferax ferrireducens)).